The following is a 205-amino-acid chain: Dephospho-CoA kinase (205 aa).

The DPCK domain maps to 4–204 (VVGLTGGIAS…QYYLTLATQQ (201 aa)). 12–17 (ASGKTT) contacts ATP.

This sequence belongs to the CoaE family.

It localises to the cytoplasm. It carries out the reaction 3'-dephospho-CoA + ATP = ADP + CoA + H(+). The protein operates within cofactor biosynthesis; coenzyme A biosynthesis; CoA from (R)-pantothenate: step 5/5. Its function is as follows. Catalyzes the phosphorylation of the 3'-hydroxyl group of dephosphocoenzyme A to form coenzyme A. This Haemophilus ducreyi (strain 35000HP / ATCC 700724) protein is Dephospho-CoA kinase.